Reading from the N-terminus, the 208-residue chain is dITP/XTP pyrophosphatase (208 aa).

7–12 (SNNAKK) lines the substrate pocket. Residues Glu39 and Asp68 each coordinate Mg(2+). Residue Asp68 is the Proton acceptor of the active site. Residues Ser69, 162–165 (FGYD), Lys185, and 190–191 (HR) contribute to the substrate site.

This sequence belongs to the HAM1 NTPase family. Homodimer. The cofactor is Mg(2+).

The catalysed reaction is XTP + H2O = XMP + diphosphate + H(+). It catalyses the reaction dITP + H2O = dIMP + diphosphate + H(+). The enzyme catalyses ITP + H2O = IMP + diphosphate + H(+). Pyrophosphatase that catalyzes the hydrolysis of nucleoside triphosphates to their monophosphate derivatives, with a high preference for the non-canonical purine nucleotides XTP (xanthosine triphosphate), dITP (deoxyinosine triphosphate) and ITP. Seems to function as a house-cleaning enzyme that removes non-canonical purine nucleotides from the nucleotide pool, thus preventing their incorporation into DNA/RNA and avoiding chromosomal lesions. In Methylibium petroleiphilum (strain ATCC BAA-1232 / LMG 22953 / PM1), this protein is dITP/XTP pyrophosphatase.